A 61-amino-acid polypeptide reads, in one-letter code: Large ribosomal subunit protein uL30 (61 aa).

The protein belongs to the universal ribosomal protein uL30 family. As to quaternary structure, part of the 50S ribosomal subunit.

This Shewanella piezotolerans (strain WP3 / JCM 13877) protein is Large ribosomal subunit protein uL30.